Reading from the N-terminus, the 213-residue chain is TVP38/TMEM64 family membrane protein YtxB (213 aa).

6 helical membrane passes run 9 to 29 (WLAV…YLNV), 34 to 54 (IRVW…GISI), 58 to 78 (LVLF…GPLL), 81 to 101 (LYTL…AGLF), 159 to 179 (AVGI…FLAG), and 181 to 201 (LPAF…PFIF).

Belongs to the TVP38/TMEM64 family.

The protein resides in the cell membrane. The protein is TVP38/TMEM64 family membrane protein YtxB (ytxB) of Bacillus subtilis (strain 168).